A 210-amino-acid chain; its full sequence is Aminoglycoside 2'-N-acetyltransferase (210 aa).

The N-acetyltransferase domain maps to 21-189; the sequence is IHTSDLDQET…SLFVLPVDLP (169 aa). Substrate is bound by residues Asp-54 and 106-107; that span reads EA. CoA contacts are provided by residues 108-110 and 115-120; these read VAV and RGDGLG. Residues Ser-141 and 176 to 177 contribute to the substrate site; that span reads ED.

Belongs to the AAC(2')-I acetyltransferase family. As to quaternary structure, homodimer.

Catalyzes the coenzyme A-dependent acetylation of the 2' hydroxyl or amino group of a broad spectrum of aminoglycosides. It confers resistance to aminoglycosides. This is Aminoglycoside 2'-N-acetyltransferase (aac) from Mycolicibacterium smegmatis (strain ATCC 700084 / mc(2)155) (Mycobacterium smegmatis).